A 153-amino-acid chain; its full sequence is Bacteriohemerythrin (153 aa).

Fe cation contacts are provided by H21, H57, E61, H76, H80, H115, and D120.

Belongs to the hemerythrin family. In terms of assembly, monomer.

Oxygen-binding protein. May be involved in a storage mechanism or for delivery to oxygen-requiring enzymes. The oxygen-binding site contains two iron atoms. In Pseudomonas paraeruginosa (strain DSM 24068 / PA7) (Pseudomonas aeruginosa (strain PA7)), this protein is Bacteriohemerythrin.